Here is a 26-residue protein sequence, read N- to C-terminus: Peroxidase 1 (26 aa).

A Ca(2+)-binding site is contributed by D15.

Belongs to the peroxidase family. Classical plant (class III) peroxidase subfamily. Heme b is required as a cofactor. The cofactor is Ca(2+).

The protein localises to the secreted. The catalysed reaction is 2 a phenolic donor + H2O2 = 2 a phenolic radical donor + 2 H2O. In terms of biological role, removal of H(2)O(2), oxidation of toxic reductants, biosynthesis and degradation of lignin, suberization, auxin catabolism, response to environmental stresses such as wounding, pathogen attack and oxidative stress. These functions might be dependent on each isozyme/isoform in each plant tissue. This is Peroxidase 1 from Vitis vinifera (Grape).